The chain runs to 427 residues: N-acylglucosamine 2-epimerase (427 aa).

Residues 195–216 (LLNLVEQLGEADEELAGKYAEL) form a leucine-zipper region.

Belongs to the N-acylglucosamine 2-epimerase family. Homodimer. Forms a heterodimer with renin and inhibits its activity.

It carries out the reaction an N-acyl-D-glucosamine = an N-acyl-D-mannosamine. It functions in the pathway amino-sugar metabolism; N-acetylneuraminate degradation. Inhibited by N-ethylmaleimide, 5,5'-dithiobis-2-nitrobenzoate and iodoacetic acid. In terms of biological role, catalyzes the interconversion of N-acetylglucosamine to N-acetylmannosamine. Involved in the N-glycolylneuraminic acid (Neu5Gc) degradation pathway: although human is not able to catalyze formation of Neu5Gc due to the inactive CMAHP enzyme, Neu5Gc is present in food and must be degraded. This is N-acylglucosamine 2-epimerase (RENBP) from Homo sapiens (Human).